The chain runs to 492 residues: Catalase isozyme 1 (492 aa).

Active-site residues include His65 and Asn138. Tyr348 is a heme binding site.

It belongs to the catalase family. Homotetramer. It depends on heme as a cofactor.

The protein resides in the peroxisome. It catalyses the reaction 2 H2O2 = O2 + 2 H2O. In terms of biological role, occurs in almost all aerobically respiring organisms and serves to protect cells from the toxic effects of hydrogen peroxide. The chain is Catalase isozyme 1 (CAT1) from Solanum lycopersicum (Tomato).